The sequence spans 109 residues: Glutaredoxin-8 (109 aa).

Residues 5–109 form the Glutaredoxin domain; the sequence is VTKAEEMIKS…EELTKIGLLP (105 aa). C25 and C28 are disulfide-bonded.

It belongs to the glutaredoxin family. In terms of assembly, monomer.

It localises to the cytoplasm. In terms of biological role, glutathione-dependent oxidoreductase with lower activity compared to the other members of the glutaredoxin family. The disulfide bond functions as an electron carrier in the glutathione-dependent synthesis of deoxyribonucleotides by the enzyme ribonucleotide reductase. In Saccharomyces cerevisiae (strain ATCC 204508 / S288c) (Baker's yeast), this protein is Glutaredoxin-8 (GRX8).